A 400-amino-acid polypeptide reads, in one-letter code: N(alpha)-acyl-glutamine aminoacylase (400 aa).

Belongs to the peptidase M20 family. Zn(2+) is required as a cofactor.

The enzyme catalyses an N(2)-acyl-L-glutamine + H2O = a carboxylate + L-glutamine. The catalysed reaction is N(2)-[(2E)-3-methylhex-2-enoyl]-L-glutaminate + H2O = (2E)-3-methylhex-2-enoate + L-glutamine. It carries out the reaction N(2)-(3-hydroxy-3-methylhexanoyl)-L-glutaminate + H2O = 3-hydroxy-3-methylhexanoate + L-glutamine. Partial loss of activity with the combination Mn(2+) and chelating agents. Activity is lost in presence of 0.5 mM dithiothreitol. Hydrolyzes odorless N-alpha-acyl-L-glutamine conjugates of short- and medium-chain fatty acids, releasing human axillary malodor compounds. The enzyme is highly specific for the glutamine residue but has a low specificity for the acyl part of the substrate. The two most common products are 3-methyl-2-hexenoic acid (3M2H) and 3-hydroxy-3-methyl-hexanoic acid (HMHA), which are produced from the odorless precursors N-alpha-3-methyl-2-hexenoyl-L-glutamine (3M2H-Gln) and N-alpha-3-hydroxy-3-methylhexanoyl-L-glutamine (HMHA-Gln). In addition, over 28 different carboxylic acids contributing to human body odor are released by this enzyme from odorless axilla secretions, including several aliphatic 3-hydroxy acids with 4-Me branches, 3,4-unsaturated, 4-Et-branched aliphatic acids, and a variety of degradation products of amino acids. This is N(alpha)-acyl-glutamine aminoacylase from Corynebacterium striatum.